A 61-amino-acid polypeptide reads, in one-letter code: Probable tautomerase lin2709 (61 aa).

Pro-2 serves as the catalytic Proton acceptor; via imino nitrogen.

The protein belongs to the 4-oxalocrotonate tautomerase family.

The protein is Probable tautomerase lin2709 of Listeria innocua serovar 6a (strain ATCC BAA-680 / CLIP 11262).